The sequence spans 146 residues: NADH-quinone oxidoreductase subunit A (146 aa).

3 consecutive transmembrane segments (helical) span residues 16–36 (FAIF…GGWF), 68–88 (FYLV…LFAW), and 98–118 (VGFV…VYLV).

It belongs to the complex I subunit 3 family. As to quaternary structure, NDH-1 is composed of 13 different subunits. Subunits NuoA, H, J, K, L, M, N constitute the membrane sector of the complex.

It localises to the cell inner membrane. It catalyses the reaction a quinone + NADH + 5 H(+)(in) = a quinol + NAD(+) + 4 H(+)(out). Its function is as follows. NDH-1 shuttles electrons from NADH, via FMN and iron-sulfur (Fe-S) centers, to quinones in the respiratory chain. The immediate electron acceptor for the enzyme in this species is believed to be ubiquinone. Couples the redox reaction to proton translocation (for every two electrons transferred, four hydrogen ions are translocated across the cytoplasmic membrane), and thus conserves the redox energy in a proton gradient. This is NADH-quinone oxidoreductase subunit A from Enterobacter sp. (strain 638).